Here is a 379-residue protein sequence, read N- to C-terminus: Probable pectin lyase A (379 aa).

A signal peptide spans 1 to 20; the sequence is MKYSTIFSAAAAVFAGSAAA. 2 disulfides stabilise this stretch: Cys-83/Cys-102 and Cys-92/Cys-226. N-linked (GlcNAc...) asparagine glycosylation is present at Asn-129. The active site involves Arg-256. Cysteines 322 and 330 form a disulfide.

This sequence belongs to the polysaccharide lyase 1 family.

Its subcellular location is the secreted. It carries out the reaction Eliminative cleavage of (1-&gt;4)-alpha-D-galacturonan methyl ester to give oligosaccharides with 4-deoxy-6-O-methyl-alpha-D-galact-4-enuronosyl groups at their non-reducing ends.. Functionally, pectinolytic enzymes consist of four classes of enzymes: pectin lyase, polygalacturonase, pectin methylesterase and rhamnogalacturonase. Among pectinolytic enzymes, pectin lyase is the most important in depolymerization of pectin, since it cleaves internal glycosidic bonds of highly methylated pectins. This Aspergillus niger (strain ATCC MYA-4892 / CBS 513.88 / FGSC A1513) protein is Probable pectin lyase A (pelA).